A 428-amino-acid polypeptide reads, in one-letter code: Tyrosine--tRNA ligase (428 aa).

Tyr41 provides a ligand contact to L-tyrosine. A 'HIGH' region motif is present at residues 46-55 (PTADSLHLGH). Tyr179 and Gln183 together coordinate L-tyrosine. Residues 239–243 (KFGKT) carry the 'KMSKS' region motif. Lys242 is a binding site for ATP. The 58-residue stretch at 361–418 (TDLMQALVDAELQPSRGQARKTIASNAVTINGEKQSDPEYIFNDEDRLFGRYTLLRRG) folds into the S4 RNA-binding domain.

This sequence belongs to the class-I aminoacyl-tRNA synthetase family. TyrS type 1 subfamily. In terms of assembly, homodimer.

The protein localises to the cytoplasm. It carries out the reaction tRNA(Tyr) + L-tyrosine + ATP = L-tyrosyl-tRNA(Tyr) + AMP + diphosphate + H(+). Its function is as follows. Catalyzes the attachment of tyrosine to tRNA(Tyr) in a two-step reaction: tyrosine is first activated by ATP to form Tyr-AMP and then transferred to the acceptor end of tRNA(Tyr). This chain is Tyrosine--tRNA ligase, found in Salmonella arizonae (strain ATCC BAA-731 / CDC346-86 / RSK2980).